The sequence spans 672 residues: MRTALLEVGLEELPASEFHSILKQLEEKSAELLKAYRVSSGSVEVFVGSRRFGVILKNLPERQEDFTEEKKGPPLNVAYDENGKPTRALEGFLRNNNASLENVVHREGYVYLSRVVEGKPVEEVLPDLFRDLVLGLNFRKPMRWGSGEHEYIRPVHWIVAMVDGRVLDLEIFGLRSSRISYGKRYHAGSIEIPDSERYYESLKKGFVISSHLERKKFVLEQIDEFEKRSSMKIERDEELIEEIVAITEYPRIVVGQFDRKYLELPEEIIVTAVKHHQRSFIAHKGTLTNTFVAFQDGPQPPENVVKGYERVINARLEDARYYFQKDLETPLEKMNEKLKEIVFQEKLGTLYDKVERIKKISQRLCEDLKLPGSFTQKVLEAASICKADIASKVVYEFPELQGVMGRIYALREGINEEIATAIEDHYSEEPQTVIGSILGIADRIDTIVGNFAIGNVPTSSKDPYGLKSKADTIFRIIRKNEWDISLEELLTFASSLVGYRLSEELETFFAGRFYQFLINELGISFDVARAVNHLWKKPLRGILSAEALQEISEKPEFQDLFVGFERVHNITKNHDSTKFDGALFEKEEEKKLMNKFYEVKEKVLKALERLNYREALQYLIELKPYIDEYFDNVFVMVKRDDLRVNRLSFLKNIDELFMMVGDMTYLVKRSQV.

It belongs to the class-II aminoacyl-tRNA synthetase family. In terms of assembly, tetramer of two alpha and two beta subunits.

It is found in the cytoplasm. It catalyses the reaction tRNA(Gly) + glycine + ATP = glycyl-tRNA(Gly) + AMP + diphosphate. The polypeptide is Glycine--tRNA ligase beta subunit (glyS) (Thermotoga maritima (strain ATCC 43589 / DSM 3109 / JCM 10099 / NBRC 100826 / MSB8)).